The sequence spans 296 residues: Uracil phosphoribosyltransferase, chloroplastic (296 aa).

The transit peptide at 1 to 61 directs the protein to the chloroplast; the sequence is MACSIGNAFR…SSSLSRRTIR (61 aa). Ala-2 bears the N-acetylalanine mark. 148-151 serves as a coordination point for GTP; it reads REPI. 5-phospho-alpha-D-ribose 1-diphosphate contacts are provided by residues Arg-158, Arg-183, Asp-211, 216-219, and Asp-282; that span reads TGGT. A uracil-binding site is contributed by 281 to 283; sequence GDA.

This sequence belongs to the UPRTase family. Requires Mg(2+) as cofactor.

It localises to the plastid. The protein resides in the chloroplast. It catalyses the reaction UMP + diphosphate = 5-phospho-alpha-D-ribose 1-diphosphate + uracil. The protein operates within pyrimidine metabolism; UMP biosynthesis via salvage pathway; UMP from uracil: step 1/1. Allosterically activated by GTP. Its function is as follows. Uracil phosphoribosyltransferase (UPRT) that catalyzes the conversion of uracil and 5-phospho-alpha-D-ribose 1-diphosphate (PRPP) to UMP and diphosphate. Is probably the only functional UPRT, since the dual-domain proteins of the UKL family seem to lack this activity. The chain is Uracil phosphoribosyltransferase, chloroplastic (UPP) from Arabidopsis thaliana (Mouse-ear cress).